Consider the following 547-residue polypeptide: Undecaprenyl phosphate-alpha-4-amino-4-deoxy-L-arabinose arabinosyl transferase (547 aa).

A run of 10 helical transmembrane segments spans residues 83 to 103, 111 to 131, 174 to 194, 205 to 225, 253 to 273, 286 to 306, 311 to 331, 346 to 366, 378 to 398, and 408 to 428; these read FASA…ALQL, FLAS…TYSV, FLTK…PYVI, FGPL…IAVH, APFW…LGLL, ISPE…FFSI, LLTY…ANAV, AWLN…LAFS, GALA…FIQL, and SALC…QSLI.

This sequence belongs to the glycosyltransferase 83 family.

It localises to the cell inner membrane. It carries out the reaction 4-amino-4-deoxy-alpha-L-arabinopyranosyl di-trans,octa-cis-undecaprenyl phosphate + lipid IVA = lipid IIA + di-trans,octa-cis-undecaprenyl phosphate.. It functions in the pathway lipopolysaccharide metabolism; 4-amino-4-deoxy-beta-L-arabinose-lipid A biosynthesis. Catalyzes the transfer of the L-Ara4N moiety of the glycolipid undecaprenyl phosphate-alpha-L-Ara4N to lipid A. The modified arabinose is attached to lipid A and is required for resistance to polymyxin and cationic antimicrobial peptides. This chain is Undecaprenyl phosphate-alpha-4-amino-4-deoxy-L-arabinose arabinosyl transferase, found in Aeromonas hydrophila subsp. hydrophila (strain ATCC 7966 / DSM 30187 / BCRC 13018 / CCUG 14551 / JCM 1027 / KCTC 2358 / NCIMB 9240 / NCTC 8049).